A 993-amino-acid polypeptide reads, in one-letter code: uncharacterized protein (993 aa).

The first 28 residues, M1–A28, serve as a signal peptide directing secretion. 7 consecutive transmembrane segments (helical) span residues I331–G351, Y359–T379, M392–M412, M494–V514, M521–A541, M554–V574, and I699–F719. Residues G779–T904 form a disordered region. The segment covering T805–S829 has biased composition (low complexity). The segment covering P838–A850 has biased composition (pro residues). Positions I866–D879 are enriched in basic and acidic residues.

The protein belongs to the TrbL/VirB6 family.

It localises to the cell membrane. This is an uncharacterized protein from Rickettsia conorii (strain ATCC VR-613 / Malish 7).